The following is a 424-amino-acid chain: Histidine--tRNA ligase (424 aa).

It belongs to the class-II aminoacyl-tRNA synthetase family. As to quaternary structure, homodimer.

It localises to the cytoplasm. The enzyme catalyses tRNA(His) + L-histidine + ATP = L-histidyl-tRNA(His) + AMP + diphosphate + H(+). In Desulfitobacterium hafniense (strain DSM 10664 / DCB-2), this protein is Histidine--tRNA ligase.